A 185-amino-acid polypeptide reads, in one-letter code: Ribosome-recycling factor (185 aa).

This sequence belongs to the RRF family.

It localises to the cytoplasm. Functionally, responsible for the release of ribosomes from messenger RNA at the termination of protein biosynthesis. May increase the efficiency of translation by recycling ribosomes from one round of translation to another. This Shewanella denitrificans (strain OS217 / ATCC BAA-1090 / DSM 15013) protein is Ribosome-recycling factor.